The primary structure comprises 491 residues: Probable cysteine proteinase 024R (491 aa).

Residues C132, H325, and N355 contribute to the active site. A helical transmembrane segment spans residues 467–487; it reads ALDLALLVLPALLIVIVVLIG.

Belongs to the peptidase C1 family.

It localises to the membrane. In terms of biological role, probable cysteine protease. The polypeptide is Probable cysteine proteinase 024R (Invertebrate iridescent virus 3 (IIV-3)).